We begin with the raw amino-acid sequence, 119 residues long: Ribonuclease P protein component (119 aa).

It belongs to the RnpA family. As to quaternary structure, consists of a catalytic RNA component (M1 or rnpB) and a protein subunit.

The enzyme catalyses Endonucleolytic cleavage of RNA, removing 5'-extranucleotides from tRNA precursor.. Its function is as follows. RNaseP catalyzes the removal of the 5'-leader sequence from pre-tRNA to produce the mature 5'-terminus. It can also cleave other RNA substrates such as 4.5S RNA. The protein component plays an auxiliary but essential role in vivo by binding to the 5'-leader sequence and broadening the substrate specificity of the ribozyme. This is Ribonuclease P protein component from Syntrophomonas wolfei subsp. wolfei (strain DSM 2245B / Goettingen).